The primary structure comprises 194 residues: Imidazoleglycerol-phosphate dehydratase (194 aa).

It belongs to the imidazoleglycerol-phosphate dehydratase family.

The protein localises to the cytoplasm. The catalysed reaction is D-erythro-1-(imidazol-4-yl)glycerol 3-phosphate = 3-(imidazol-4-yl)-2-oxopropyl phosphate + H2O. It functions in the pathway amino-acid biosynthesis; L-histidine biosynthesis; L-histidine from 5-phospho-alpha-D-ribose 1-diphosphate: step 6/9. The chain is Imidazoleglycerol-phosphate dehydratase from Streptococcus thermophilus (strain ATCC BAA-491 / LMD-9).